The sequence spans 501 residues: Solute carrier family 2, facilitated glucose transporter member 5 (501 aa).

The residue at position 1 (Met-1) is an N-acetylmethionine. Residues 1 to 18 (MEQQDQSMKEGRLTLVLA) are Cytoplasmic-facing. Residues 19–39 (LATLIAAFGSSFQYGYNVAAV) form a helical membrane-spanning segment. Tyr-32 provides a ligand contact to D-fructose. The Extracellular portion of the chain corresponds to 40–68 (NSPALLMQQFYNETYYGRTGEFMEDFPLT). N-linked (GlcNAc...) asparagine glycosylation occurs at Asn-51. A helical membrane pass occupies residues 69–91 (LLWSVTVSMFPFGGFIGSLLVGP). Over 92–98 (LVNKFGR) the chain is Cytoplasmic. The chain crosses the membrane as a helical span at residues 99-119 (KGALLFNNIFSIVPAILMGCS). Over 120–126 (RVAKSFE) the chain is Extracellular. Residues 127–149 (LIIISRLLVGICAGVSSNVVPMY) form a helical membrane-spanning segment. Residues 150 to 161 (LGELAPKNLRGA) lie on the Cytoplasmic side of the membrane. A helical transmembrane segment spans residues 162–182 (LGVVPQLFITVGILVAQIFGL). Residue Gln-167 coordinates D-fructose. Residues 183–192 (RNLLANVDGW) are Extracellular-facing. The helical transmembrane segment at 193-213 (PILLGLTGVPAALQLVLLPFF) threads the bilayer. The Cytoplasmic portion of the chain corresponds to 214–277 (PESPRYLLIQ…LFRMRSLRWQ (64 aa)). A helical transmembrane segment spans residues 278 to 298 (LLSIIVLMGGQQLSGVNAIYY). D-fructose is bound by residues Gln-288 and 296-298 (IYY). The Extracellular portion of the chain corresponds to 299–313 (YADQIYLSAGVPKEH). The chain crosses the membrane as a helical span at residues 314 to 334 (VQFVTAGTGAVNVVMTFCAVF). Residues 335–342 (VVELLGRR) are Cytoplasmic-facing. Residues 343–363 (LLLLLGFSICLVACCVLTAAL) form a helical membrane-spanning segment. Residues 364-371 (ALQDTVSW) lie on the Extracellular side of the membrane. A helical transmembrane segment spans residues 372–394 (MPYISIVCVISYVIGHALGPSPI). Residue His-387 coordinates D-fructose. Topologically, residues 395–412 (PALLITEIFLQSSRPSAF) are cytoplasmic. Residues 413-433 (MVGGSVHWLSNFTVGLIFPFI) form a helical membrane-spanning segment. 419–420 (HW) serves as a coordination point for D-fructose. Residues 434–439 (QEGLGP) are Extracellular-facing. Residues 440 to 460 (YSFIVFAVICLLTTIYIFLIV) form a helical membrane-spanning segment. Residues 461 to 501 (PETKAKTFIEINQIFTKMNKVSEVYPEKEELKELPPVTLEQ) are Cytoplasmic-facing.

Belongs to the major facilitator superfamily. Sugar transporter (TC 2.A.1.1) family. Glucose transporter subfamily.

It is found in the apical cell membrane. The protein resides in the cell membrane. The protein localises to the sarcolemma. It carries out the reaction D-fructose(out) = D-fructose(in). Its function is as follows. Functions as a fructose transporter that has only low activity with other monosaccharides. Can mediate the uptake of deoxyglucose, but with low efficiency. Essential for fructose uptake in the small intestine. Plays a role in the regulation of salt uptake and blood pressure in response to dietary fructose. Required for the development of high blood pressure in response to high dietary fructose intake. The protein is Solute carrier family 2, facilitated glucose transporter member 5 of Pongo abelii (Sumatran orangutan).